The sequence spans 212 residues: Interleukin-6 (212 aa).

Positions 1–29 are cleaved as a signal peptide; sequence MTSFSTSAFRPVAFSLGLLLVMPAAFPAP. The cysteines at positions 72 and 78 are disulfide-linked. N-linked (GlcNAc...) asparagine glycosylation occurs at N73. A Phosphoserine modification is found at S81. C101 and C111 are joined by a disulfide. 2 N-linked (GlcNAc...) asparagine glycosylation sites follow: N160 and N172.

This sequence belongs to the IL-6 superfamily. Component of a hexamer of two molecules each of IL6, IL6R and IL6ST; first binds to IL6R to associate with the signaling subunit IL6ST. Interacts with IL6R (via the N-terminal ectodomain); this interaction may be affected by IL6R-binding with SORL1, hence decreasing IL6 cis signaling. Interacts with SORL1 (via the N-terminal ectodomain); this interaction leads to IL6 internalization and lysosomal degradation. May form a trimeric complex with the soluble SORL1 ectodomain and soluble IL6R receptor; this interaction might stabilize circulating IL6, hence promoting IL6 trans signaling.

Its subcellular location is the secreted. Its function is as follows. Cytokine with a wide variety of biological functions in immunity, tissue regeneration, and metabolism. Binds to IL6R, then the complex associates to the signaling subunit IL6ST/gp130 to trigger the intracellular IL6-signaling pathway. The interaction with the membrane-bound IL6R and IL6ST stimulates 'classic signaling', whereas the binding of IL6 and soluble IL6R to IL6ST stimulates 'trans-signaling'. Alternatively, 'cluster signaling' occurs when membrane-bound IL6:IL6R complexes on transmitter cells activate IL6ST receptors on neighboring receiver cells. IL6 is a potent inducer of the acute phase response. Rapid production of IL6 contributes to host defense during infection and tissue injury, but excessive IL6 synthesis is involved in disease pathology. In the innate immune response, is synthesized by myeloid cells, such as macrophages and dendritic cells, upon recognition of pathogens through toll-like receptors (TLRs) at the site of infection or tissue injury. In the adaptive immune response, is required for the differentiation of B cells into immunoglobulin-secreting cells. Plays a major role in the differentiation of CD4(+) T cell subsets. Essential factor for the development of T follicular helper (Tfh) cells that are required for the induction of germinal-center formation. Required to drive naive CD4(+) T cells to the Th17 lineage. Also required for proliferation of myeloma cells and the survival of plasmablast cells. In terms of biological role, acts as an essential factor in bone homeostasis and on vessels directly or indirectly by induction of VEGF, resulting in increased angiogenesis activity and vascular permeability. Induces, through 'trans-signaling' and synergistically with IL1B and TNF, the production of VEGF. Involved in metabolic controls, is discharged into the bloodstream after muscle contraction increasing lipolysis and improving insulin resistance. 'Trans-signaling' in central nervous system also regulates energy and glucose homeostasis. Mediates, through GLP-1, crosstalk between insulin-sensitive tissues, intestinal L cells and pancreatic islets to adapt to changes in insulin demand. Also acts as a myokine. Plays a protective role during liver injury, being required for maintenance of tissue regeneration. Also has a pivotal role in iron metabolism by regulating HAMP/hepcidin expression upon inflammation or bacterial infection. Through activation of IL6ST-YAP-NOTCH pathway, induces inflammation-induced epithelial regeneration. The polypeptide is Interleukin-6 (IL6) (Saimiri sciureus (Common squirrel monkey)).